A 260-amino-acid chain; its full sequence is MAHQAHAYHMVDPSPWPLTGAVAALLLTSGLAMWFHFGSMILLTLGLITMVLTMIQWWRDVIREGTFQGHHTPPVQKGLRYGMILFITSEVFFFIGFFWAFYNSSLAPTYELGECWPPTGITPLNPFEVPLLNTAVLLASGVTVTWAHHSIMHGDRKEAIQSLTLTILLGLYFTALQAMEYYEAPFTIADGVYGSTFFVATGFHGLHVIIGSLFLSVCLLRQIQYHFTSKHHFGFEAAWYWHFVDVVWLFLYVSIYWWGS.

Residues methionine 1–proline 15 are Mitochondrial matrix-facing. The chain crosses the membrane as a helical span at residues tryptophan 16–tryptophan 34. Over phenylalanine 35–methionine 40 the chain is Mitochondrial intermembrane. A helical transmembrane segment spans residues isoleucine 41 to threonine 66. The Mitochondrial matrix segment spans residues phenylalanine 67–threonine 72. A helical membrane pass occupies residues proline 73–serine 105. The Mitochondrial intermembrane portion of the chain corresponds to leucine 106–glutamate 128. A helical membrane pass occupies residues valine 129–methionine 152. Topologically, residues histidine 153–aspartate 155 are mitochondrial matrix. A helical transmembrane segment spans residues arginine 156–glutamate 183. Residues alanine 184 to aspartate 190 lie on the Mitochondrial intermembrane side of the membrane. A helical membrane pass occupies residues glycine 191–isoleucine 223. Over glutamine 224–histidine 232 the chain is Mitochondrial matrix. A helical transmembrane segment spans residues phenylalanine 233–isoleucine 255. At tyrosine 256–serine 260 the chain is on the mitochondrial intermembrane side.

It belongs to the cytochrome c oxidase subunit 3 family. In terms of assembly, component of the cytochrome c oxidase (complex IV, CIV), a multisubunit enzyme composed of 14 subunits. The complex is composed of a catalytic core of 3 subunits MT-CO1, MT-CO2 and MT-CO3, encoded in the mitochondrial DNA, and 11 supernumerary subunits COX4I, COX5A, COX5B, COX6A, COX6B, COX6C, COX7A, COX7B, COX7C, COX8 and NDUFA4, which are encoded in the nuclear genome. The complex exists as a monomer or a dimer and forms supercomplexes (SCs) in the inner mitochondrial membrane with NADH-ubiquinone oxidoreductase (complex I, CI) and ubiquinol-cytochrome c oxidoreductase (cytochrome b-c1 complex, complex III, CIII), resulting in different assemblies (supercomplex SCI(1)III(2)IV(1) and megacomplex MCI(2)III(2)IV(2)).

It localises to the mitochondrion inner membrane. It catalyses the reaction 4 Fe(II)-[cytochrome c] + O2 + 8 H(+)(in) = 4 Fe(III)-[cytochrome c] + 2 H2O + 4 H(+)(out). In terms of biological role, component of the cytochrome c oxidase, the last enzyme in the mitochondrial electron transport chain which drives oxidative phosphorylation. The respiratory chain contains 3 multisubunit complexes succinate dehydrogenase (complex II, CII), ubiquinol-cytochrome c oxidoreductase (cytochrome b-c1 complex, complex III, CIII) and cytochrome c oxidase (complex IV, CIV), that cooperate to transfer electrons derived from NADH and succinate to molecular oxygen, creating an electrochemical gradient over the inner membrane that drives transmembrane transport and the ATP synthase. Cytochrome c oxidase is the component of the respiratory chain that catalyzes the reduction of oxygen to water. Electrons originating from reduced cytochrome c in the intermembrane space (IMS) are transferred via the dinuclear copper A center (CU(A)) of subunit 2 and heme A of subunit 1 to the active site in subunit 1, a binuclear center (BNC) formed by heme A3 and copper B (CU(B)). The BNC reduces molecular oxygen to 2 water molecules using 4 electrons from cytochrome c in the IMS and 4 protons from the mitochondrial matrix. The polypeptide is Cytochrome c oxidase subunit 3 (mt-co3) (Xenopus laevis (African clawed frog)).